The sequence spans 221 residues: Ras-related protein Rab-28 (221 aa).

Ser2 bears the N-acetylserine mark. Position 8 is a phosphoserine (Ser8). GTP contacts are provided by Gly21, Gly24, Lys25, Thr26, Ser27, Gly38, Lys39, Tyr41, and Thr44. Thr26 lines the Mg(2+) pocket. The interval 35 to 49 (ETFGKRYKQTIGLDF) is switch I. Mg(2+) is bound by residues Thr44 and Asp68. Residues 68–85 (DIGGQTIGGKMLDKYIYG) are switch II. Residues Gly71, Asn129, Lys130, Asp132, Ala160, and Lys161 each coordinate GTP. Cys218 is modified (cysteine methyl ester). Residue Cys218 is the site of S-farnesyl cysteine attachment. The propeptide at 219-221 (AVQ) is removed in mature form.

The protein belongs to the small GTPase superfamily. Rab family. In terms of assembly, interacts (prenylated form) with PDE6D; the interaction promotes RAB28 delivery to the photoreceptor outer segments. Interacts with KCNJ13; the interaction may facilitate cone outer segments phagocytosis. Also participates in nuclear factor kappa-B p65/RELA nuclear transport in endothelial cells. Requires Mg(2+) as cofactor. In terms of processing, isoprenylated.

The protein resides in the cell membrane. Its subcellular location is the cytoplasm. It is found in the cytoskeleton. The protein localises to the cilium basal body. It localises to the nucleus. The enzyme catalyses GTP + H2O = GDP + phosphate + H(+). With respect to regulation, regulated by guanine nucleotide exchange factors (GEFs) which promote the exchange of bound GDP for free GTP. Regulated by GTPase activating proteins (GAPs) which increase the GTP hydrolysis activity. Inhibited by GDP dissociation inhibitors (GDIs). In terms of biological role, the small GTPases Rab are key regulators of intracellular membrane trafficking, from the formation of transport vesicles to their fusion with membranes. Rabs cycle between an inactive GDP-bound form and an active GTP-bound form that is able to recruit to membranes different sets of downstream effectors directly responsible for vesicle formation, movement, tethering and fusion. RAB28 is required for shedding and phagocytosis of cone cell outer segments (OS) discs in the retina. Also participates in nuclear factor kappa-B p65/RELA nuclear transport in endothelial cells. The sequence is that of Ras-related protein Rab-28 (RAB28) from Pongo abelii (Sumatran orangutan).